Consider the following 636-residue polypeptide: Chitin synthase VI (636 aa).

Helical transmembrane passes span 23-43 (LQWF…LFCI), 374-394 (TIRT…TTTA), 399-419 (LPVG…LYFG), and 427-447 (IWFY…YMVY). Residues 595-636 (QRLRLEQRPRTGPSLNARWQNGPQASETSQGRSQVDDVGIAF) form a disordered region. Residues 607 to 627 (PSLNARWQNGPQASETSQGRS) are compositionally biased toward polar residues.

Belongs to the chitin synthase family. Class VI subfamily. As to expression, moderately expressed during appressorium formation.

It localises to the cell membrane. The enzyme catalyses [(1-&gt;4)-N-acetyl-beta-D-glucosaminyl](n) + UDP-N-acetyl-alpha-D-glucosamine = [(1-&gt;4)-N-acetyl-beta-D-glucosaminyl](n+1) + UDP + H(+). Polymerizes chitin, a structural polymer of the cell wall and septum, by transferring the sugar moiety of UDP-GlcNAc to the non-reducing end of the growing chitin polymer. Contributes to the production of conidia but is the only chitine synthase that does not contribute to the ability of fungal conidia to germinate. Involved in fungal stress tolerances. The chain is Chitin synthase VI from Metarhizium acridum (strain CQMa 102).